Consider the following 190-residue polypeptide: Large ribosomal subunit protein bL9 (190 aa).

The protein belongs to the bacterial ribosomal protein bL9 family.

Binds to the 23S rRNA. The chain is Large ribosomal subunit protein bL9 from Methylobacterium radiotolerans (strain ATCC 27329 / DSM 1819 / JCM 2831 / NBRC 15690 / NCIMB 10815 / 0-1).